The sequence spans 116 residues: MKQEILEVFDNTYPDRDYTIEIVNPEFTSVCPKTGLPDFGTITVSYIPDKTCIELKSLKYYFLEFRNAGIFYENVTNRILDDLVAVSSPRSMTVRTEWKARGGITETVTVSHNASA.

Cys-31 acts as the Thioimide intermediate in catalysis. Residue Asp-38 is the Proton donor of the active site. Substrate-binding positions include 53–55 (IEL) and 72–73 (YE).

It belongs to the GTP cyclohydrolase I family. QueF type 1 subfamily.

The protein resides in the cytoplasm. It carries out the reaction 7-aminomethyl-7-carbaguanine + 2 NADP(+) = 7-cyano-7-deazaguanine + 2 NADPH + 3 H(+). Its pathway is tRNA modification; tRNA-queuosine biosynthesis. Its function is as follows. Catalyzes the NADPH-dependent reduction of 7-cyano-7-deazaguanine (preQ0) to 7-aminomethyl-7-deazaguanine (preQ1). The protein is NADPH-dependent 7-cyano-7-deazaguanine reductase of Chlorobium luteolum (strain DSM 273 / BCRC 81028 / 2530) (Pelodictyon luteolum).